The following is a 316-amino-acid chain: Pantothenate kinase (316 aa).

Residue 95-102 (GSVAVGKS) participates in ATP binding.

This sequence belongs to the prokaryotic pantothenate kinase family.

It localises to the cytoplasm. The enzyme catalyses (R)-pantothenate + ATP = (R)-4'-phosphopantothenate + ADP + H(+). It functions in the pathway cofactor biosynthesis; coenzyme A biosynthesis; CoA from (R)-pantothenate: step 1/5. The protein is Pantothenate kinase of Pectobacterium carotovorum subsp. carotovorum (strain PC1).